We begin with the raw amino-acid sequence, 337 residues long: Protein-methionine-sulfoxide reductase catalytic subunit MsrP (337 aa).

Positions 1–50 (MLIKLPSASGSKESDVTPESIYLSRRTLLASSLAGLAVTALPRWASAADA) form a signal peptide, tat-type signal. Mo-molybdopterin contacts are provided by residues Asn-94, 97–98 (YE), Cys-152, Thr-187, Asn-237, Arg-242, and 253–255 (SVK).

It belongs to the MsrP family. As to quaternary structure, heterodimer of a catalytic subunit (MsrP) and a heme-binding subunit (MsrQ). The cofactor is Mo-molybdopterin. Predicted to be exported by the Tat system. The position of the signal peptide cleavage has not been experimentally proven.

The protein resides in the periplasm. The catalysed reaction is L-methionyl-[protein] + a quinone + H2O = L-methionyl-(S)-S-oxide-[protein] + a quinol. It carries out the reaction L-methionyl-[protein] + a quinone + H2O = L-methionyl-(R)-S-oxide-[protein] + a quinol. Its function is as follows. Part of the MsrPQ system that repairs oxidized periplasmic proteins containing methionine sulfoxide residues (Met-O), using respiratory chain electrons. Thus protects these proteins from oxidative-stress damage caused by reactive species of oxygen and chlorine generated by the host defense mechanisms. MsrPQ is essential for the maintenance of envelope integrity under bleach stress, rescuing a wide series of structurally unrelated periplasmic proteins from methionine oxidation. The catalytic subunit MsrP is non-stereospecific, being able to reduce both (R-) and (S-) diastereoisomers of methionine sulfoxide. In Pseudomonas syringae pv. tomato (strain ATCC BAA-871 / DC3000), this protein is Protein-methionine-sulfoxide reductase catalytic subunit MsrP.